The following is a 386-amino-acid chain: Phosphoglycerate kinase (386 aa).

Residues aspartate 21–asparagine 23, arginine 36, histidine 59–arginine 62, arginine 113, and arginine 146 each bind substrate. Residues lysine 197, glutamate 314, and glycine 340–threonine 343 contribute to the ATP site.

The protein belongs to the phosphoglycerate kinase family. As to quaternary structure, monomer.

It localises to the cytoplasm. The catalysed reaction is (2R)-3-phosphoglycerate + ATP = (2R)-3-phospho-glyceroyl phosphate + ADP. Its pathway is carbohydrate degradation; glycolysis; pyruvate from D-glyceraldehyde 3-phosphate: step 2/5. This Vibrio vulnificus (strain CMCP6) protein is Phosphoglycerate kinase.